We begin with the raw amino-acid sequence, 112 residues long: Seminal vesicle secretory protein 4 (112 aa).

A signal peptide spans 1–21 (MKSTSLFLCSLLLLLVTGAIG). The segment at 26–112 (EKYSQSEEVV…RSRFAQDVLN (87 aa)) is disordered. 2 stretches are compositionally biased toward low complexity: residues 36-47 (SESFASGPSSGS) and 85-97 (RSSG…GESS).

This sequence belongs to the SVP2/SVP5/SVP6 family. As to expression, testis.

The protein resides in the secreted. Its subcellular location is the extracellular space. In Rattus norvegicus (Rat), this protein is Seminal vesicle secretory protein 4 (Svs4).